A 285-amino-acid chain; its full sequence is Sulfotransferase 2A2 (285 aa).

Residues Lys-44, Ser-45, Gly-46, Thr-47, Asn-48, and Trp-49 each contribute to the 3'-phosphoadenylyl sulfate site. Catalysis depends on His-99, which acts as the Proton acceptor. Positions 121, 129, 184, 218, 247, 248, and 249 each coordinate 3'-phosphoadenylyl sulfate.

The protein belongs to the sulfotransferase 1 family. As to expression, detected in liver.

The protein resides in the cytoplasm. The catalysed reaction is an alcohol + 3'-phosphoadenylyl sulfate = an alkyl sulfate + adenosine 3',5'-bisphosphate + H(+). In terms of biological role, sulfotransferase that utilizes 3'-phospho-5'-adenylyl sulfate (PAPS) as sulfonate donor to catalyze the sulfate conjugation of a potential wide variety of acceptor molecules bearing a hydroxyl group. Sulfonation increases the water solubility of most compounds, and therefore their renal excretion, but it can also result in bioactivation to form active metabolites. The protein is Sulfotransferase 2A2 of Rattus norvegicus (Rat).